A 309-amino-acid chain; its full sequence is D-alanine--D-alanine ligase (309 aa).

The ATP-grasp domain maps to K104–A301. V130–T185 contributes to the ATP binding site. 3 residues coordinate Mg(2+): D255, E268, and N270.

Belongs to the D-alanine--D-alanine ligase family. The cofactor is Mg(2+). Requires Mn(2+) as cofactor.

It is found in the cytoplasm. It carries out the reaction 2 D-alanine + ATP = D-alanyl-D-alanine + ADP + phosphate + H(+). It participates in cell wall biogenesis; peptidoglycan biosynthesis. In terms of biological role, cell wall formation. The polypeptide is D-alanine--D-alanine ligase (Acinetobacter baylyi (strain ATCC 33305 / BD413 / ADP1)).